Consider the following 105-residue polypeptide: MPLFARLCQPQSRRMFSSISSFSALSVLRPQTGMLLNSSPLKTPSFTPLGFGLIGQRRWKSRGNTYQPSTLKRKRTFGFLARAKSKQGSKILKRRKLKGRWFLSH.

The N-terminal 16 residues, 1-16, are a transit peptide targeting the mitochondrion; sequence MPLFARLCQPQSRRMF.

Belongs to the bacterial ribosomal protein bL34 family. Component of the mitochondrial large ribosomal subunit (mt-LSU). Mature yeast 74S mitochondrial ribosomes consist of a small (37S) and a large (54S) subunit. The 37S small subunit contains a 15S ribosomal RNA (15S mt-rRNA) and 34 different proteins. The 54S large subunit contains a 21S rRNA (21S mt-rRNA) and 46 different proteins.

It localises to the mitochondrion. In terms of biological role, component of the mitochondrial ribosome (mitoribosome), a dedicated translation machinery responsible for the synthesis of mitochondrial genome-encoded proteins, including at least some of the essential transmembrane subunits of the mitochondrial respiratory chain. The mitoribosomes are attached to the mitochondrial inner membrane and translation products are cotranslationally integrated into the membrane. The protein is Large ribosomal subunit protein bL34m of Saccharomyces cerevisiae (strain ATCC 204508 / S288c) (Baker's yeast).